A 170-amino-acid chain; its full sequence is Orotate phosphoribosyltransferase (170 aa).

Residues arginine 86, lysine 87, lysine 90, histidine 92, and glutamate 111–serine 119 contribute to the 5-phospho-alpha-D-ribose 1-diphosphate site. 2 residues coordinate orotate: threonine 115 and arginine 143.

It belongs to the purine/pyrimidine phosphoribosyltransferase family. PyrE subfamily. Homodimer. It depends on Mg(2+) as a cofactor.

The catalysed reaction is orotidine 5'-phosphate + diphosphate = orotate + 5-phospho-alpha-D-ribose 1-diphosphate. The protein operates within pyrimidine metabolism; UMP biosynthesis via de novo pathway; UMP from orotate: step 1/2. Its function is as follows. Catalyzes the transfer of a ribosyl phosphate group from 5-phosphoribose 1-diphosphate to orotate, leading to the formation of orotidine monophosphate (OMP). This Methanoculleus marisnigri (strain ATCC 35101 / DSM 1498 / JR1) protein is Orotate phosphoribosyltransferase.